A 144-amino-acid polypeptide reads, in one-letter code: Large ribosomal subunit protein uL11 (144 aa).

This sequence belongs to the universal ribosomal protein uL11 family. In terms of assembly, part of the ribosomal stalk of the 50S ribosomal subunit. Interacts with L10 and the large rRNA to form the base of the stalk. L10 forms an elongated spine to which L12 dimers bind in a sequential fashion forming a multimeric L10(L12)X complex. One or more lysine residues are methylated.

Forms part of the ribosomal stalk which helps the ribosome interact with GTP-bound translation factors. The protein is Large ribosomal subunit protein uL11 of Polaromonas naphthalenivorans (strain CJ2).